The sequence spans 244 residues: 5-oxoprolinase subunit A (244 aa).

This sequence belongs to the LamB/PxpA family. Forms a complex composed of PxpA, PxpB and PxpC.

The enzyme catalyses 5-oxo-L-proline + ATP + 2 H2O = L-glutamate + ADP + phosphate + H(+). Its function is as follows. Catalyzes the cleavage of 5-oxoproline to form L-glutamate coupled to the hydrolysis of ATP to ADP and inorganic phosphate. The sequence is that of 5-oxoprolinase subunit A from Escherichia coli O139:H28 (strain E24377A / ETEC).